The primary structure comprises 320 residues: Tyrosine recombinase Synpcc7942_B2651 (320 aa).

The Core-binding (CB) domain maps to 16–106; it reads VQDWDVLQML…ALKSLVRFSR (91 aa). One can recognise a Tyr recombinase domain in the interval 127-313; it reads RDTTGTTPER…RQDFQGECTE (187 aa). Catalysis depends on residues R167, K193, H264, R267, and H291. The O-(3'-phospho-DNA)-tyrosine intermediate role is filled by Y300.

The protein belongs to the 'phage' integrase family.

The protein resides in the cytoplasm. Functionally, site-specific tyrosine recombinase, which acts by catalyzing the cutting and rejoining of the recombining DNA molecules. The polypeptide is Tyrosine recombinase Synpcc7942_B2651 (Synechococcus elongatus (strain ATCC 33912 / PCC 7942 / FACHB-805) (Anacystis nidulans R2)).